We begin with the raw amino-acid sequence, 372 residues long: NAD(P)H-quinone oxidoreductase subunit 1 (372 aa).

Transmembrane regions (helical) follow at residues 27–47 (VLWM…GVLV), 97–117 (FLFT…YLIV), 128–148 (VGAG…GLLM), 176–196 (LALA…IDIV), 204–224 (ILGW…IAAL), 254–274 (FALF…LVSI), 308–328 (ALGI…AILL), and 347–367 (FLLP…LTFP).

It belongs to the complex I subunit 1 family. NDH-1 is composed of at least 11 different subunits.

Its subcellular location is the cellular thylakoid membrane. The catalysed reaction is a plastoquinone + NADH + (n+1) H(+)(in) = a plastoquinol + NAD(+) + n H(+)(out). It carries out the reaction a plastoquinone + NADPH + (n+1) H(+)(in) = a plastoquinol + NADP(+) + n H(+)(out). In terms of biological role, NDH-1 shuttles electrons from an unknown electron donor, via FMN and iron-sulfur (Fe-S) centers, to quinones in the respiratory and/or the photosynthetic chain. The immediate electron acceptor for the enzyme in this species is believed to be plastoquinone. Couples the redox reaction to proton translocation, and thus conserves the redox energy in a proton gradient. The sequence is that of NAD(P)H-quinone oxidoreductase subunit 1 from Synechococcus elongatus (strain ATCC 33912 / PCC 7942 / FACHB-805) (Anacystis nidulans R2).